The sequence spans 426 residues: Enolase (426 aa).

Q162 is a binding site for (2R)-2-phosphoglycerate. E204 acts as the Proton donor in catalysis. The Mg(2+) site is built by D241, E284, and D311. (2R)-2-phosphoglycerate-binding residues include K336, R365, S366, and K387. Catalysis depends on K336, which acts as the Proton acceptor.

This sequence belongs to the enolase family. As to quaternary structure, component of the RNA degradosome, a multiprotein complex involved in RNA processing and mRNA degradation. Mg(2+) serves as cofactor.

It is found in the cytoplasm. The protein resides in the secreted. It localises to the cell surface. It catalyses the reaction (2R)-2-phosphoglycerate = phosphoenolpyruvate + H2O. It participates in carbohydrate degradation; glycolysis; pyruvate from D-glyceraldehyde 3-phosphate: step 4/5. Its function is as follows. Catalyzes the reversible conversion of 2-phosphoglycerate (2-PG) into phosphoenolpyruvate (PEP). It is essential for the degradation of carbohydrates via glycolysis. This Hydrogenovibrio crunogenus (strain DSM 25203 / XCL-2) (Thiomicrospira crunogena) protein is Enolase.